Reading from the N-terminus, the 426-residue chain is Dihydrofolate synthase/folylpolyglutamate synthase (426 aa).

58 to 61 contributes to the ATP binding site; sequence GKGS. Position 82 (S82) interacts with Mg(2+). 121–124 provides a ligand contact to 7,8-dihydropteroate; the sequence is TRFE. Mg(2+) is bound at residue E145. 152–154 provides a ligand contact to 7,8-dihydropteroate; the sequence is LDA. H172 contacts Mg(2+). Residues R289 and D302 each contribute to the ATP site.

The protein belongs to the folylpolyglutamate synthase family. In terms of assembly, monomer. It depends on Mg(2+) as a cofactor.

The catalysed reaction is 7,8-dihydropteroate + L-glutamate + ATP = 7,8-dihydrofolate + ADP + phosphate + H(+). The enzyme catalyses (6S)-5,6,7,8-tetrahydrofolyl-(gamma-L-Glu)(n) + L-glutamate + ATP = (6S)-5,6,7,8-tetrahydrofolyl-(gamma-L-Glu)(n+1) + ADP + phosphate + H(+). It catalyses the reaction 10-formyltetrahydrofolyl-(gamma-L-Glu)(n) + L-glutamate + ATP = 10-formyltetrahydrofolyl-(gamma-L-Glu)(n+1) + ADP + phosphate + H(+). It carries out the reaction (6R)-5,10-methylenetetrahydrofolyl-(gamma-L-Glu)(n) + L-glutamate + ATP = (6R)-5,10-methylenetetrahydrofolyl-(gamma-L-Glu)(n+1) + ADP + phosphate + H(+). The protein operates within cofactor biosynthesis; tetrahydrofolate biosynthesis; 7,8-dihydrofolate from 2-amino-4-hydroxy-6-hydroxymethyl-7,8-dihydropteridine diphosphate and 4-aminobenzoate: step 2/2. Its pathway is cofactor biosynthesis; tetrahydrofolylpolyglutamate biosynthesis. In terms of biological role, functions in two distinct reactions of the de novo folate biosynthetic pathway. Catalyzes the addition of a glutamate residue to dihydropteroate (7,8-dihydropteroate or H2Pte) to form dihydrofolate (7,8-dihydrofolate monoglutamate or H2Pte-Glu). Also catalyzes successive additions of L-glutamate to tetrahydrofolate or 10-formyltetrahydrofolate or 5,10-methylenetetrahydrofolate, leading to folylpolyglutamate derivatives. The polypeptide is Dihydrofolate synthase/folylpolyglutamate synthase (folC) (Buchnera aphidicola subsp. Baizongia pistaciae (strain Bp)).